The primary structure comprises 518 residues: Calcium/calmodulin-dependent protein kinase kinase cmkC (518 aa).

Positions 1–72 (MANEGAGSLQ…SEYTLSQDDG (72 aa)) are disordered. Composition is skewed to polar residues over residues 8-17 (SLQQDASPGS) and 60-71 (NARSEYTLSQDD). In terms of domain architecture, Protein kinase spans 81–376 (YVIKQEIGRG…MDELREHPWV (296 aa)). ATP is bound by residues 87 to 95 (IGRGSFGAV) and lysine 109. The disordered stretch occupies residues 119-149 (RAKSQLLRQSRGPKRSSRWPKLPFSSPGTGT). Catalysis depends on aspartate 243, which acts as the Proton acceptor. Residues 404–409 (FSAITK) form an autoinhibitory domain region. The interval 407-431 (ITKNFGHVLAVMKAAKKFKSLQGPT) is calmodulin-binding. The tract at residues 453-472 (PTQMDPEESVSLPSPLPYKK) is disordered.

Belongs to the protein kinase superfamily. Ser/Thr protein kinase family.

It carries out the reaction L-seryl-[protein] + ATP = O-phospho-L-seryl-[protein] + ADP + H(+). The enzyme catalyses L-threonyl-[protein] + ATP = O-phospho-L-threonyl-[protein] + ADP + H(+). Activated by Ca(2+)/calmodulin. Binding of calmodulin may relieve intrasteric autoinhibition. Functionally, calcium/calmodulin-dependent protein kinase that operates in the calcium-triggered CaMKK-CaMK1 signaling cascade. Phosphorylates and activates cmkB in vitro. Required in G1-phase of the cell cycle for proper timing of the initial nuclear division after germination as well as for subsequent nuclear division cycles. Required for the normal temporal regulation of nimX activity. In Emericella nidulans (Aspergillus nidulans), this protein is Calcium/calmodulin-dependent protein kinase kinase cmkC.